We begin with the raw amino-acid sequence, 562 residues long: Potassium-transporting ATPase potassium-binding subunit (562 aa).

10 helical membrane passes run Ala-5 to Ser-25, Ala-63 to Ala-83, Gly-132 to Ile-152, Leu-175 to Leu-195, Leu-250 to Phe-270, Gln-279 to Met-299, Gly-379 to Gly-399, Met-416 to Leu-436, Val-483 to Ile-503, and Leu-526 to Ala-546.

Belongs to the KdpA family. The system is composed of three essential subunits: KdpA, KdpB and KdpC.

The protein localises to the cell inner membrane. In terms of biological role, part of the high-affinity ATP-driven potassium transport (or Kdp) system, which catalyzes the hydrolysis of ATP coupled with the electrogenic transport of potassium into the cytoplasm. This subunit binds the periplasmic potassium ions and delivers the ions to the membrane domain of KdpB through an intramembrane tunnel. This chain is Potassium-transporting ATPase potassium-binding subunit, found in Pectobacterium atrosepticum (strain SCRI 1043 / ATCC BAA-672) (Erwinia carotovora subsp. atroseptica).